A 490-amino-acid chain; its full sequence is Cytochrome P450 2C13, male-specific (490 aa).

C435 is a heme binding site.

Belongs to the cytochrome P450 family. Heme is required as a cofactor. Liver, and to a lesser extent in prostate, kidney, heart and brain.

It is found in the endoplasmic reticulum membrane. The protein resides in the microsome membrane. It catalyses the reaction an organic molecule + reduced [NADPH--hemoprotein reductase] + O2 = an alcohol + oxidized [NADPH--hemoprotein reductase] + H2O + H(+). Functionally, cytochromes P450 are a group of heme-thiolate monooxygenases. In liver microsomes, this enzyme is involved in an NADPH-dependent electron transport pathway. It oxidizes a variety of structurally unrelated compounds, including steroids, fatty acids, and xenobiotics. In Rattus norvegicus (Rat), this protein is Cytochrome P450 2C13, male-specific (Cyp2c13).